Consider the following 476-residue polypeptide: Dermokine (476 aa).

Residues 1-21 form the signal peptide; the sequence is MKFQGPLACLLLALCLGSGEA. 4 stretches are compositionally biased toward gly residues: residues 153 to 169, 193 to 202, 236 to 259, and 268 to 298; these read SQGG…GGLG, WGQGGNGGPP, GSGG…GSGS, and SSGG…GSRG. The interval 153–351 is disordered; sequence SQGGLGGQGQ…ESGIQNSETS (199 aa). Over residues 299–315 the composition is skewed to low complexity; the sequence is DSGSESSWGSSTGSSSG. Residues 316-326 are compositionally biased toward gly residues; sequence NHGGSGGGNGH.

Belongs to the dermokine family. As to quaternary structure, homooligomer. Seems to be able to homodimerize and homotrimerize. O-glycosylated. Expressed in epidermis; in the spinous and granular layers and in placenta. Also found in the epithelia of the small intestine, macrophages of the lung and endothelial cells of the lung. Isoform 15 is expressed in epidermis and placenta. Isoform 1 is expressed in epidermis.

The protein resides in the secreted. In terms of biological role, may act as a soluble regulator of keratinocyte differentiation. The polypeptide is Dermokine (DMKN) (Homo sapiens (Human)).